Reading from the N-terminus, the 163-residue chain is Large ribosomal subunit protein uL15 (163 aa).

The protein belongs to the universal ribosomal protein uL15 family. As to quaternary structure, part of the 50S ribosomal subunit.

Binds to the 23S rRNA. The chain is Large ribosomal subunit protein uL15 from Orientia tsutsugamushi (strain Boryong) (Rickettsia tsutsugamushi).